The chain runs to 116 residues: Large ribosomal subunit protein bL19 (116 aa).

The protein belongs to the bacterial ribosomal protein bL19 family.

In terms of biological role, this protein is located at the 30S-50S ribosomal subunit interface and may play a role in the structure and function of the aminoacyl-tRNA binding site. The sequence is that of Large ribosomal subunit protein bL19 from Azotobacter vinelandii (strain DJ / ATCC BAA-1303).